Here is a 246-residue protein sequence, read N- to C-terminus: Probable chemoreceptor glutamine deamidase CheD (246 aa).

The tract at residues Gly225–Lys246 is disordered.

The protein belongs to the CheD family.

The catalysed reaction is L-glutaminyl-[protein] + H2O = L-glutamyl-[protein] + NH4(+). Its function is as follows. Probably deamidates glutamine residues to glutamate on methyl-accepting chemotaxis receptors (MCPs), playing an important role in chemotaxis. This is Probable chemoreceptor glutamine deamidase CheD from Burkholderia vietnamiensis (strain G4 / LMG 22486) (Burkholderia cepacia (strain R1808)).